The chain runs to 1024 residues: PH and SEC7 domain-containing protein 1 (1024 aa).

Residues 67 to 96 (CTPLRAPPSPHIAPSPWGPSSPTGQPPPGA) are disordered. The segment covering 71 to 95 (RAPPSPHIAPSPWGPSSPTGQPPPG) has biased composition (pro residues). Ser-126 and Ser-156 each carry phosphoserine. Disordered stretches follow at residues 154–195 (STSD…LPNG), 250–277 (PSSGAKPPEQVLPSRGVGSKQGSGVAVG), 307–401 (REEA…GPDS), and 434–536 (PTQS…LDST). The span at 348–365 (NEDDEAGGEEDVDDEVFE) shows a compositional bias: acidic residues. Over residues 445 to 463 (PPQPPAPRPDPPAPAPLAP) the composition is skewed to pro residues. Residues 495-507 (PRKELPSPSHSED) are compositionally biased toward basic and acidic residues. The SEC7 domain occupies 512 to 706 (GAAPLGSEPP…KALYSSIKNE (195 aa)). Ser-720 carries the phosphoserine modification. Residues 756–869 (AVYKHGALVR…WITRINVVAA (114 aa)) enclose the PH domain. Coiled coils occupy residues 898 to 924 (LSQEEQVRTHEAKLKAMASELREHRAA) and 956 to 983 (AALLRVKMKAASEELDTIEAALAQAGST). Residues 976 to 1024 (ALAQAGSTEDGCPPPHSSPSLRPKPTSQPRAQRPGSETRAGAGSTRPKP) form a disordered region.

The protein belongs to the PSD family. As to quaternary structure, interacts with ACTN1. Interacts (ARF6-bound form) with KCNK1; does not interact with KCNK1 in the absence of ARF6. In terms of tissue distribution, highest expression detected in brain and some expression detected also in uterus, stomach, ovary and intestine, with isoform 2 being expressed at the highest levels. In the brain, isoform 1 is highly expressed in the strata oriens, radiatum, lacunosum-moleculare of the hippocampal CA1-3 regions and the dentate molecular layer of the hippocampal formation, with lower levels detected in the neuronal cell layers and the stratum lucidum (at protein level). Not detected in tongue, thymus, spleen, lung, heart, liver and kidney.

The protein resides in the cell membrane. The protein localises to the cell projection. It is found in the ruffle. Its subcellular location is the ruffle membrane. It localises to the cleavage furrow. Guanine nucleotide exchange factor for ARF6. Isoform 2 and isoform 3 induce cytoskeletal remodeling, but lead to distinct morphological changes in HeLa cells: isoform 2 induces cell elongation and formation of actin-rich protrusions, whereas isoform 3 promotes the formation of membrane ruffles and loss of stress fibers. This is PH and SEC7 domain-containing protein 1 (Psd) from Mus musculus (Mouse).